The primary structure comprises 236 residues: ATP synthase subunit a (236 aa).

Transmembrane regions (helical) follow at residues 17 to 37 (LANV…AVLA), 80 to 100 (MTLI…SVVI), 114 to 134 (VVTL…GIKL), 179 to 199 (ILLA…IAAI), and 208 to 228 (FSIF…MVYM).

It belongs to the ATPase A chain family. F-type ATPases have 2 components, CF(1) - the catalytic core - and CF(0) - the membrane proton channel. CF(1) has five subunits: alpha(3), beta(3), gamma(1), delta(1), epsilon(1). CF(0) has three main subunits: a(1), b(2) and c(9-12). The alpha and beta chains form an alternating ring which encloses part of the gamma chain. CF(1) is attached to CF(0) by a central stalk formed by the gamma and epsilon chains, while a peripheral stalk is formed by the delta and b chains.

The protein localises to the cell membrane. Key component of the proton channel; it plays a direct role in the translocation of protons across the membrane. In Anoxybacillus flavithermus (strain DSM 21510 / WK1), this protein is ATP synthase subunit a.